Here is a 215-residue protein sequence, read N- to C-terminus: Ribonuclease T (215 aa).

The region spanning 20–194 (VVIDVETAGF…YDTLQTAKLF (175 aa)) is the Exonuclease domain. Mg(2+) contacts are provided by D23, E25, H181, and D186. Residue H181 is the Proton donor/acceptor of the active site.

It belongs to the RNase T family. As to quaternary structure, homodimer. It depends on Mg(2+) as a cofactor.

Trims short 3' overhangs of a variety of RNA species, leaving a one or two nucleotide 3' overhang. Responsible for the end-turnover of tRNA: specifically removes the terminal AMP residue from uncharged tRNA (tRNA-C-C-A). Also appears to be involved in tRNA biosynthesis. In Yersinia pseudotuberculosis serotype I (strain IP32953), this protein is Ribonuclease T.